Consider the following 276-residue polypeptide: 3-methyl-2-oxobutanoate hydroxymethyltransferase (276 aa).

Residues D44 and D83 each contribute to the Mg(2+) site. Residues 44 to 45 (DS), D83, and K112 contribute to the 3-methyl-2-oxobutanoate site. E114 contacts Mg(2+). E180 functions as the Proton acceptor in the catalytic mechanism. Positions 256–276 (PTEAQSSRMKPDELSRALNAE) are disordered.

It belongs to the PanB family. As to quaternary structure, homodecamer; pentamer of dimers. Mg(2+) serves as cofactor.

The protein localises to the cytoplasm. The catalysed reaction is 3-methyl-2-oxobutanoate + (6R)-5,10-methylene-5,6,7,8-tetrahydrofolate + H2O = 2-dehydropantoate + (6S)-5,6,7,8-tetrahydrofolate. The protein operates within cofactor biosynthesis; (R)-pantothenate biosynthesis; (R)-pantoate from 3-methyl-2-oxobutanoate: step 1/2. Functionally, catalyzes the reversible reaction in which hydroxymethyl group from 5,10-methylenetetrahydrofolate is transferred onto alpha-ketoisovalerate to form ketopantoate. This is 3-methyl-2-oxobutanoate hydroxymethyltransferase from Gluconacetobacter diazotrophicus (strain ATCC 49037 / DSM 5601 / CCUG 37298 / CIP 103539 / LMG 7603 / PAl5).